The sequence spans 422 residues: MAASSTRLRCLYASSAPAWKKSPSQSIISLSRHYATTSSTTPSLNPDESSSSSSSTIPKRRKTTTFRDKLNAGPSFADFVTGGNGNNASLDPEEAYALEKVMIPGPAGRKKEHTRLPSWLKTPIPDSTNYKRIKKDLRGLDLHTVCEEARCPNISDCWGGSDKSAATATIMLMGDTCTRGCRFCSVKTLRTPGPLDPHEPENTAEALSRWGLGDDLPDGGAHHFAETVIKIKQKAPGILVECLTGDFAGDLDMVSLVAKSGLDVYAHNVETVEALTPHVRDRRATFKQSLRVLEAAKRAKPSLITKTSMMLGFGETEDQLWDALRQLRASNVDVVTFGQYMRPTKRHMAVHEYVTPDKFELWRQRALEMGFLYVASGPLVRSSYKAGEAFIENVLKKRRGVGNTPGAEVASAKDVPVDVLGK.

A mitochondrion-targeting transit peptide spans 1–34; sequence MAASSTRLRCLYASSAPAWKKSPSQSIISLSRHY. Over residues 37 to 48 the composition is skewed to polar residues; that stretch reads TSSTTPSLNPDE. The tract at residues 37-70 is disordered; it reads TSSTTPSLNPDESSSSSSSTIPKRRKTTTFRDKL. [4Fe-4S] cluster is bound by residues cysteine 146, cysteine 151, cysteine 157, cysteine 177, cysteine 181, cysteine 184, and serine 383. In terms of domain architecture, Radical SAM core spans 160-372; that stretch reads GSDKSAATAT…RQRALEMGFL (213 aa).

The protein belongs to the radical SAM superfamily. Lipoyl synthase family. The cofactor is [4Fe-4S] cluster.

It is found in the mitochondrion. It catalyses the reaction [[Fe-S] cluster scaffold protein carrying a second [4Fe-4S](2+) cluster] + N(6)-octanoyl-L-lysyl-[protein] + 2 oxidized [2Fe-2S]-[ferredoxin] + 2 S-adenosyl-L-methionine + 4 H(+) = [[Fe-S] cluster scaffold protein] + N(6)-[(R)-dihydrolipoyl]-L-lysyl-[protein] + 4 Fe(3+) + 2 hydrogen sulfide + 2 5'-deoxyadenosine + 2 L-methionine + 2 reduced [2Fe-2S]-[ferredoxin]. It functions in the pathway protein modification; protein lipoylation via endogenous pathway; protein N(6)-(lipoyl)lysine from octanoyl-[acyl-carrier-protein]: step 2/2. In terms of biological role, catalyzes the radical-mediated insertion of two sulfur atoms into the C-6 and C-8 positions of the octanoyl moiety bound to the lipoyl domains of lipoate-dependent enzymes, thereby converting the octanoylated domains into lipoylated derivatives. This Talaromyces stipitatus (strain ATCC 10500 / CBS 375.48 / QM 6759 / NRRL 1006) (Penicillium stipitatum) protein is Lipoyl synthase, mitochondrial.